The chain runs to 251 residues: Imidazole glycerol phosphate synthase subunit HisF (251 aa).

Catalysis depends on residues aspartate 11 and aspartate 130.

This sequence belongs to the HisA/HisF family. As to quaternary structure, heterodimer of HisH and HisF.

It localises to the cytoplasm. It carries out the reaction 5-[(5-phospho-1-deoxy-D-ribulos-1-ylimino)methylamino]-1-(5-phospho-beta-D-ribosyl)imidazole-4-carboxamide + L-glutamine = D-erythro-1-(imidazol-4-yl)glycerol 3-phosphate + 5-amino-1-(5-phospho-beta-D-ribosyl)imidazole-4-carboxamide + L-glutamate + H(+). It functions in the pathway amino-acid biosynthesis; L-histidine biosynthesis; L-histidine from 5-phospho-alpha-D-ribose 1-diphosphate: step 5/9. Functionally, IGPS catalyzes the conversion of PRFAR and glutamine to IGP, AICAR and glutamate. The HisF subunit catalyzes the cyclization activity that produces IGP and AICAR from PRFAR using the ammonia provided by the HisH subunit. The protein is Imidazole glycerol phosphate synthase subunit HisF of Chlorobium luteolum (strain DSM 273 / BCRC 81028 / 2530) (Pelodictyon luteolum).